Reading from the N-terminus, the 112-residue chain is Probable insulin-like peptide beta-type 5 (112 aa).

Positions 1 to 19 (MNSVFTIIFVLCALQVAAS) are cleaved as a signal peptide. A propeptide spans 20 to 58 (FRQSFGPSMSEESASMQLLRELQHNMMESAHRPMPRARR) (removed; by convertase egl-3). Disulfide bonds link cysteine 68–cysteine 97, cysteine 80–cysteine 110, cysteine 84–cysteine 111, and cysteine 96–cysteine 101.

The protein belongs to the insulin family. May be processed by serine endoprotease bli-4. Expressed by ASI and ASJ sensory neurons.

It localises to the secreted. Functionally, probable insulin-like peptide which negatively regulates synapse development at the neuromuscular junctions. Probably acts as a daf-2/InsR agonist ligand to prevent dauer formation under optimal environmental conditions. Acts on AWC sensory neurons to regulate high salt chemotaxis responses. This chain is Probable insulin-like peptide beta-type 5 (ins-6), found in Caenorhabditis elegans.